A 178-amino-acid polypeptide reads, in one-letter code: Translation initiation factor IF-3 (178 aa).

Belongs to the IF-3 family. Monomer.

It localises to the cytoplasm. IF-3 binds to the 30S ribosomal subunit and shifts the equilibrium between 70S ribosomes and their 50S and 30S subunits in favor of the free subunits, thus enhancing the availability of 30S subunits on which protein synthesis initiation begins. The protein is Translation initiation factor IF-3 of Ralstonia nicotianae (strain ATCC BAA-1114 / GMI1000) (Ralstonia solanacearum).